A 339-amino-acid polypeptide reads, in one-letter code: Trace amine-associated receptor 1 (339 aa).

Topologically, residues 1–24 (MMPFCHNIINISCVKNNWSNDVRA) are extracellular. Disulfide bonds link C5-C178, C13-C88, and C96-C182. N10 and N17 each carry an N-linked (GlcNAc...) asparagine glycan. Residues 25–49 (SLYSLMVLIILTTLVGNLIVIVSIS) form a helical membrane-spanning segment. The Cytoplasmic portion of the chain corresponds to 50-59 (HFKQLHTPTN). A helical membrane pass occupies residues 60–81 (WLIHSMATVDFLLGCLVMPYSM). Over 82–96 (VRSAEHCWYFGEVFC) the chain is Extracellular. Residues 97–119 (KIHTSTDIMLSSASIFHLSFISI) traverse the membrane as a helical segment. D103 lines the 2-phenylethylamine pocket. Residues 120 to 139 (DRYYAVCDPLRYKAKMNILV) are Cytoplasmic-facing. A helical transmembrane segment spans residues 140–161 (ICVMIFISWSVPAVFAFGMIFL). Residues 162–188 (ELNFKGAEEIYYKHVHCRGGCSVFFSK) are Extracellular-facing. The extracellular Loop 2 (ECL2) stretch occupies residues 175–186 (HVHCRGGCSVFF). The helical transmembrane segment at 189–211 (ISGVLTFMTSFYIPGSIMLCVYY) threads the bilayer. Residues 212–249 (RIYLIAKEQARLISDANQKLQIGLEMKNGISQSKERKA) lie on the Cytoplasmic side of the membrane. Residues 250 to 273 (VKTLGIVMGVFLICWCPFFICTVM) form a helical membrane-spanning segment. Topologically, residues 274–286 (DPFLHYIIPPTLN) are extracellular. The helical transmembrane segment at 287 to 307 (DVLIWFGYLNSTFNPMVYAFF) threads the bilayer. At 308 to 339 (YPWFRKALKMMLFGKIFQKDSSRCKLFLELSS) the chain is on the cytoplasmic side.

This sequence belongs to the G-protein coupled receptor 1 family. Expressed at low level in both the central and peripheral nervous system. Moderately expressed in stomach. Low levels in amygdala, kidney, and lung, and small intestine. Trace amounts in cerebellum, dorsal root ganglia, hippocampus, hypothalamus, liver, medulla, pancreas, pituitary, pontine reticular formation, prostate, skeletal muscle and spleen.

The protein resides in the endomembrane system. It localises to the endoplasmic reticulum membrane. The protein localises to the cell membrane. Its activity is regulated as follows. Activated by SEP-363856 small molecule: IHCH-7179 acts both as an agonist activator for HTR1A and TAAR1. Its function is as follows. Intracellular G-protein coupled receptor for trace amines, which recognizes endogenous amine-containing metabolites such as beta-phenylethylamine (beta-PEA), 3-iodothyronamine (T1AM), isoamylamine (IAA), cadaverine (CAD), cyclohexylamine (CHA), p-tyramine (p-TYR), trimethylamine (TMA), octopamine and tryptamine. Also functions as a receptor for various drugs and psychoactive substances, such as amphetamine and methamphetamine. Unresponsive to classical biogenic amines, such as epinephrine and histamine and only partially activated by dopamine and serotonin. Expressed in both the central and peripheral nervous system: TAAR1 activation regulates the activity of several neurotransmitter signaling pathways by (1) decreasing the basal firing rates of the neurons involved and by (2) lowering the sensitivity of receptors to neurotransmitters. Ligand binding causes a conformation change that triggers signaling via guanine nucleotide-binding proteins (G proteins) and modulates the activity of downstream effectors. TAAR1 is coupled with different G(i)/G(o)-, G(s)- or G(q)/G(11) classes of G alpha proteins depending on the ligand. CAD-binding is coupled to G(i)/G(o) G alpha proteins and mediates inhibition of adenylate cyclase activity. T1AM- or beta-PEA-binding is coupled to G(s) G alpha proteins and mediates activation of adenylate cyclase activity. CHA- or IAA-binding is coupled to G(q)/G(11) G alpha proteins and activates phospholipase C-beta, releasing diacylglycerol (DAG) and inositol 1,4,5-trisphosphate (IP3) second messengers. TMA-binding is coupled with all three G(i)/G(o)-, G(s)- or G(q)/G(11) G alpha protein subtypes. Amphetamine-binding is coupled with G(s)- or G(12)/G(13) G alpha protein subtypes. The sequence is that of Trace amine-associated receptor 1 from Homo sapiens (Human).